Reading from the N-terminus, the 703-residue chain is Protein STRUBBELIG-RECEPTOR FAMILY 8 (703 aa).

Residues 1–27 form the signal peptide; sequence MAIGDRAMFTVLLLFIASISGFSVVRC. Residues 28–291 are Extracellular-facing; that stretch reads VTDPSDVQAL…GKGLSGGVVT (264 aa). 7 LRR repeats span residues 96–120, 122–142, 143–165, 166–190, 192–212, 213–233, and 234–256; these read LKSL…LPPN, TSLN…ISAM, GSLS…IFAD, HKSL…LSTV, TLSV…VLSG, LPLK…PKEL, and SSIQ…PQPE. 4 N-linked (GlcNAc...) asparagine glycosylation sites follow: asparagine 120, asparagine 130, asparagine 149, and asparagine 178. An N-linked (GlcNAc...) asparagine glycan is attached at asparagine 226. The disordered stretch occupies residues 247–284; it reads DNVPASPQPERPGKKETPSGSKKPKIGSEEKSSDSGKG. Residues 292-312 traverse the membrane as a helical segment; the sequence is GIVFGSLFVAGIIALVLYLCL. The Cytoplasmic segment spans residues 313 to 703; sequence HKKKRKVRGS…PEHEHVDISF (391 aa). The 278-residue stretch at 395 to 672 folds into the Protein kinase domain; the sequence is FSQENIIGEG…SEVVQQLVRL (278 aa). Residues 401–409 and lysine 423 each bind ATP; that span reads IGEGSLGRV.

It belongs to the protein kinase superfamily. Ser/Thr protein kinase family. Expressed in seedlings, roots, stems, leaves, flowers and siliques.

Its subcellular location is the membrane. The polypeptide is Protein STRUBBELIG-RECEPTOR FAMILY 8 (SRF8) (Arabidopsis thaliana (Mouse-ear cress)).